The following is a 323-amino-acid chain: Sphingolipid delta(4)-desaturase/C4-monooxygenase DES2 (323 aa).

Residue G2 is the site of N-myristoyl glycine attachment. The next 2 helical transmembrane spans lie at 41-61 (PHIKWTVSGMVLVQVLACWLV) and 68-88 (WLLFWAYAFGGCINHSLTLAI). A Histidine box-1 motif is present at residues 89-93 (HDISH). The segment at 95–99 (TAFGT) is required for C4-hydroxylase activity. Positions 128–132 (HVDHH) match the Histidine box-2 motif. A helical membrane pass occupies residues 210–231 (VYLLGSSLLGLGLHPISGHFVA). A Histidine box-3 motif is present at residues 259–263 (HMEHH).

This sequence belongs to the fatty acid desaturase type 1 family. DEGS subfamily. As to expression, highly expressed in intestinal crypt cells and adjacent epithelial cells (at protein level).

The protein resides in the endoplasmic reticulum membrane. It carries out the reaction a dihydroceramide + 2 Fe(II)-[cytochrome b5] + O2 + 2 H(+) = a phytoceramide + 2 Fe(III)-[cytochrome b5] + H2O. The enzyme catalyses an N-acylsphinganine + 2 Fe(II)-[cytochrome b5] + O2 + 2 H(+) = an N-acylsphing-4-enine + 2 Fe(III)-[cytochrome b5] + 2 H2O. The catalysed reaction is an N-acylsphinganine + 2 Fe(II)-[cytochrome b5] + O2 + 2 H(+) = an N-acyl-(4R)-4-hydroxysphinganine + 2 Fe(III)-[cytochrome b5] + H2O. It catalyses the reaction N-octanoylsphinganine + 2 Fe(II)-[cytochrome b5] + O2 + 2 H(+) = N-octanoyl-4-hydroxysphinganine + 2 Fe(III)-[cytochrome b5] + H2O. It participates in membrane lipid metabolism; sphingolipid biosynthesis. In terms of biological role, bifunctional enzyme which acts both as a sphingolipid delta(4)-desaturase and a sphingolipid C4-monooxygenase. The protein is Sphingolipid delta(4)-desaturase/C4-monooxygenase DES2 of Mus musculus (Mouse).